A 796-amino-acid chain; its full sequence is Cadherin-11 (796 aa).

An N-terminal signal peptide occupies residues 1-22 (MKENYCLQAALVCLGMLCHSHA). A propeptide spanning residues 23 to 53 (FAPERRGHLRPSFHGHHEKGKEGQVLQRSKR) is cleaved from the precursor. Cadherin domains are found at residues 54 to 159 (GWVW…PPEF), 160 to 268 (LHET…PPKF), 269 to 383 (PQSV…PPMF), 384 to 486 (LAPS…DNAP), and 487 to 612 (KFAA…YILN). Topologically, residues 54 to 617 (GWVWNQFFVI…AYILNAGLST (564 aa)) are extracellular. Asn-455 and Asn-540 each carry an N-linked (GlcNAc...) asparagine glycan. Residues 618–640 (GALIAILACIVILLVIVVLFVTL) form a helical membrane-spanning segment. Residues 641-796 (RRQKKEPLIV…GSKDTFDDDS (156 aa)) lie on the Cytoplasmic side of the membrane. Ser-788 carries the phosphoserine modification. A Phosphothreonine modification is found at Thr-791.

In terms of assembly, interacts with PCDH8. In terms of tissue distribution, expressed mainly in brain but also found in other tissues. Expressed in neuroblasts. In the embryo from 67 to 72 days of gestation, detected at high levels in facial mesenchyme including the central palatal mesenchyme, dental mesenchyme, the eye and optic muscle, and the tongue (at protein level).

It localises to the cell membrane. Functionally, cadherins are calcium-dependent cell adhesion proteins. They preferentially interact with themselves in a homophilic manner in connecting cells; cadherins may thus contribute to the sorting of heterogeneous cell types. Required for proper focal adhesion assembly. Involved in the regulation of cell migration. The polypeptide is Cadherin-11 (CDH11) (Homo sapiens (Human)).